Consider the following 479-residue polypeptide: Glycine betaine methyltransferase (479 aa).

It belongs to the trimethylamine methyltransferase family.

The catalysed reaction is Co(I)-[glycine betaine-specific corrinoid protein] + glycine betaine + H(+) = methyl-Co(III)-[glycine betaine-specific corrinoid protein] + N,N-dimethylglycine. Its function is as follows. Methyltransferase able to methylate free cob(I)alamin in vitro, using glycine betaine as the methyl donor, yealding methylcobalamin (methylCbl) and dimethylglycine. In vivo, probably carries out the methylation of a corrinoid protein, likely the adjacently encoded DSY3155, with glycine betaine, to then supply methyl groups to tetrahydrofolate (THF) for ultimate conversion to carbon dioxide; oxidation of the methyl group would also provide reducing equivalents for anaerobic respiration. Thus, may function in the pathway that allows anaerobic methylotrophic growth of D.hafniense using glycine betaine. Cannot use quaternary amines such as carnitine and choline as substrates, nor tertiary amines such as dimethylglycine or trimethylamine. The sequence is that of Glycine betaine methyltransferase from Desulfitobacterium hafniense (strain Y51).